The primary structure comprises 644 residues: DNA mismatch repair protein MutL (644 aa).

Positions 340-360 (KKEKDESVQEQFKFEHTKPRE) are enriched in basic and acidic residues. Positions 340 to 425 (KKEKDESVQE…ETVREEKEWT (86 aa)) are disordered. The span at 387 to 400 (QLWQPPKQEWQPPQ) shows a compositional bias: low complexity. Basic and acidic residues predominate over residues 416 to 425 (ETVREEKEWT).

This sequence belongs to the DNA mismatch repair MutL/HexB family.

This protein is involved in the repair of mismatches in DNA. It is required for dam-dependent methyl-directed DNA mismatch repair. May act as a 'molecular matchmaker', a protein that promotes the formation of a stable complex between two or more DNA-binding proteins in an ATP-dependent manner without itself being part of a final effector complex. The chain is DNA mismatch repair protein MutL from Bacillus mycoides (strain KBAB4) (Bacillus weihenstephanensis).